The sequence spans 30 residues: Photosystem I reaction center subunit XII (30 aa).

Residues 7–27 traverse the membrane as a helical segment; that stretch reads VFIGLVIALVPAILAFKLGLS.

It belongs to the PsaM family.

The protein resides in the plastid. It is found in the chloroplast thylakoid membrane. This chain is Photosystem I reaction center subunit XII, found in Cyanidium caldarium (Red alga).